Here is a 101-residue protein sequence, read N- to C-terminus: Small ribosomal subunit protein bS6 (101 aa).

It belongs to the bacterial ribosomal protein bS6 family.

In terms of biological role, binds together with bS18 to 16S ribosomal RNA. This Micrococcus luteus (strain ATCC 4698 / DSM 20030 / JCM 1464 / CCM 169 / CCUG 5858 / IAM 1056 / NBRC 3333 / NCIMB 9278 / NCTC 2665 / VKM Ac-2230) (Micrococcus lysodeikticus) protein is Small ribosomal subunit protein bS6.